The chain runs to 239 residues: Fatty acid metabolism regulator protein (239 aa).

An HTH gntR-type domain is found at glutamine 6–phenylalanine 74. Residues glutamate 34–glutamine 53 constitute a DNA-binding region (H-T-H motif).

Homodimer.

It is found in the cytoplasm. Its function is as follows. Multifunctional regulator of fatty acid metabolism. The chain is Fatty acid metabolism regulator protein from Klebsiella pneumoniae (strain 342).